The sequence spans 552 residues: FERRY endosomal RAB5 effector complex subunit 3 (552 aa).

Positions 383–403 (LKESLDSGNQNGGNDDKTKNA) are disordered.

Component of the FERRY complex composed of five subunits, TBCK, PPP1R21, FERRY3, CRYZL1 and GATD1 with a ratio of 1:2:1:2:4, respectively.

Its subcellular location is the cytoplasm. It is found in the early endosome. In terms of biological role, component of the FERRY complex (Five-subunit Endosomal Rab5 and RNA/ribosome intermediary). The FERRY complex directly interacts with mRNAs and RAB5A, and functions as a RAB5A effector involved in the localization and the distribution of specific mRNAs most likely by mediating their endosomal transport. The complex recruits mRNAs and ribosomes to early endosomes through direct mRNA-interaction. Plays a role in mast cell degranulation. The chain is FERRY endosomal RAB5 effector complex subunit 3 from Pongo abelii (Sumatran orangutan).